A 335-amino-acid chain; its full sequence is Glyceraldehyde-3-phosphate dehydrogenase (335 aa).

Residues T13–I14 and G111 contribute to the NAD(+) site. S140 to N142 lines the D-glyceraldehyde 3-phosphate pocket. The active-site Nucleophile is the C141. R169 contacts NAD(+). H195–G196 serves as a coordination point for D-glyceraldehyde 3-phosphate. Residue Q300 participates in NAD(+) binding.

The protein belongs to the glyceraldehyde-3-phosphate dehydrogenase family. As to quaternary structure, homotetramer.

It localises to the cytoplasm. The catalysed reaction is D-glyceraldehyde 3-phosphate + phosphate + NADP(+) = (2R)-3-phospho-glyceroyl phosphate + NADPH + H(+). It catalyses the reaction D-glyceraldehyde 3-phosphate + phosphate + NAD(+) = (2R)-3-phospho-glyceroyl phosphate + NADH + H(+). The protein operates within carbohydrate degradation; glycolysis; pyruvate from D-glyceraldehyde 3-phosphate: step 1/5. The sequence is that of Glyceraldehyde-3-phosphate dehydrogenase from Methanococcoides burtonii (strain DSM 6242 / NBRC 107633 / OCM 468 / ACE-M).